Here is a 2102-residue protein sequence, read N- to C-terminus: Mediator of RNA polymerase II transcription subunit 13-like (2102 aa).

6 disordered regions span residues 304 to 335, 432 to 487, 514 to 587, 689 to 758, 776 to 819, and 947 to 1034; these read SYAGAPHNQLVHGDTGISSVTLTPPTSPEEAQ, QRAC…QPSL, VTSS…LDPL, SSAV…TTSL, NSDE…DLHQ, and SVVE…SSVE. Residues 439 to 450 are compositionally biased toward pro residues; that stretch reads GHPPSAGQPPQP. The segment covering 455 to 467 has biased composition (basic and acidic residues); that stretch reads KMAEKLEKGDKQQ. Residues 693–714 show a composition bias toward acidic residues; sequence CDEDPEQESDPYAFEEGDEEFN. Composition is skewed to basic and acidic residues over residues 715–737 and 794–804; these read FSDKDKKSGPEREAGKKAKREDG and AEEKFGGKEPK. Positions 947-974 are enriched in polar residues; the sequence is SVVEQEQSCTPQTHNTFMSNSAPPSNSG. The span at 979–990 shows a compositional bias: low complexity; that stretch reads PSPATPRISAPT. A compositionally biased stretch (polar residues) spans 1015–1029; that stretch reads SDLNSPASTPSTCRP. Short sequence motifs (LXXLL motif) lie at residues 1165-1169 and 1254-1258; these read LMLLL and LRMLL. 2 disordered regions span residues 1451–1574 and 1948–1983; these read LTQR…DGDS and NSPTTSPVHSPGSHYHHGGDGSKGQGTDRMESHDES. Low complexity-rich tracts occupy residues 1458–1467, 1476–1502, and 1522–1538; these read SSSQTSSSSS, TPTTNSNSNTNTNTTPTSTSTSSSSSS, and GAQGLQSSQQSGGQSAG. Residues 1542–1552 are compositionally biased toward polar residues; that stretch reads DATSATSQPQV. Residues 1973 to 1983 are compositionally biased toward basic and acidic residues; the sequence is GTDRMESHDES.

This sequence belongs to the Mediator complex subunit 13 family. In terms of assembly, component of the Mediator complex.

The protein resides in the nucleus. Its function is as follows. Component of the Mediator complex, a coactivator involved in regulated gene transcription of nearly all RNA polymerase II-dependent genes. Mediator functions as a bridge to convey information from gene-specific regulatory proteins to the basal RNA polymerase II transcription machinery. Mediator is recruited to promoters by direct interactions with regulatory proteins and serves as a scaffold for the assembly of a functional preinitiation complex with RNA polymerase II and the general transcription factors. This chain is Mediator of RNA polymerase II transcription subunit 13-like, found in Danio rerio (Zebrafish).